The sequence spans 212 residues: 2-C-methyl-D-erythritol 4-phosphate cytidylyltransferase (212 aa).

Belongs to the IspD/TarI cytidylyltransferase family. IspD subfamily.

The catalysed reaction is 2-C-methyl-D-erythritol 4-phosphate + CTP + H(+) = 4-CDP-2-C-methyl-D-erythritol + diphosphate. It functions in the pathway isoprenoid biosynthesis; isopentenyl diphosphate biosynthesis via DXP pathway; isopentenyl diphosphate from 1-deoxy-D-xylulose 5-phosphate: step 2/6. Its function is as follows. Catalyzes the formation of 4-diphosphocytidyl-2-C-methyl-D-erythritol from CTP and 2-C-methyl-D-erythritol 4-phosphate (MEP). The chain is 2-C-methyl-D-erythritol 4-phosphate cytidylyltransferase from Chlamydia caviae (strain ATCC VR-813 / DSM 19441 / 03DC25 / GPIC) (Chlamydophila caviae).